Reading from the N-terminus, the 209-residue chain is Small ribosomal subunit protein uS3 (209 aa).

Positions Ile-38–Lys-107 constitute a KH type-2 domain.

Belongs to the universal ribosomal protein uS3 family. In terms of assembly, part of the 30S ribosomal subunit. Forms a tight complex with proteins S10 and S14.

Functionally, binds the lower part of the 30S subunit head. Binds mRNA in the 70S ribosome, positioning it for translation. This is Small ribosomal subunit protein uS3 from Thermotoga sp. (strain RQ2).